The sequence spans 211 residues: NADH-quinone oxidoreductase subunit A (211 aa).

3 helical membrane passes run 7–27 (WSAL…LVVP), 61–81 (FYLV…LYAY), and 88–108 (VGWI…IGLI).

The protein belongs to the complex I subunit 3 family. In terms of assembly, NDH-1 is composed of 14 different subunits. Subunits NuoA, H, J, K, L, M, N constitute the membrane sector of the complex.

The protein resides in the cell inner membrane. The catalysed reaction is a quinone + NADH + 5 H(+)(in) = a quinol + NAD(+) + 4 H(+)(out). Functionally, NDH-1 shuttles electrons from NADH, via FMN and iron-sulfur (Fe-S) centers, to quinones in the respiratory chain. The immediate electron acceptor for the enzyme in this species is believed to be ubiquinone. Couples the redox reaction to proton translocation (for every two electrons transferred, four hydrogen ions are translocated across the cytoplasmic membrane), and thus conserves the redox energy in a proton gradient. In Psychrobacter sp. (strain PRwf-1), this protein is NADH-quinone oxidoreductase subunit A.